The sequence spans 339 residues: Glyceraldehyde-3-phosphate dehydrogenase (339 aa).

Residues 12–13 (RI), aspartate 39, arginine 84, and serine 127 contribute to the NAD(+) site. D-glyceraldehyde 3-phosphate-binding positions include 157-159 (SCT), threonine 188, arginine 203, 216-217 (TG), and arginine 239. Catalysis depends on cysteine 158, which acts as the Nucleophile. Asparagine 320 is a binding site for NAD(+).

This sequence belongs to the glyceraldehyde-3-phosphate dehydrogenase family. In terms of assembly, homotetramer.

Its subcellular location is the cytoplasm. It catalyses the reaction D-glyceraldehyde 3-phosphate + phosphate + NAD(+) = (2R)-3-phospho-glyceroyl phosphate + NADH + H(+). It participates in carbohydrate degradation; glycolysis; pyruvate from D-glyceraldehyde 3-phosphate: step 1/5. Functionally, catalyzes the oxidative phosphorylation of glyceraldehyde 3-phosphate (G3P) to 1,3-bisphosphoglycerate (BPG) using the cofactor NAD. The first reaction step involves the formation of a hemiacetal intermediate between G3P and a cysteine residue, and this hemiacetal intermediate is then oxidized to a thioester, with concomitant reduction of NAD to NADH. The reduced NADH is then exchanged with the second NAD, and the thioester is attacked by a nucleophilic inorganic phosphate to produce BPG. The chain is Glyceraldehyde-3-phosphate dehydrogenase (gapA) from Mycobacterium leprae (strain TN).